The chain runs to 324 residues: MPELAVQKVVVHPLVLLSVVDHFNRIGKVGNQKRVVGVLLGSWQKKVLDVSNSFAVPFDEDDKDDSVWFLDHDYLENMYGMFKKVNARERIVGWYHTGPKLHKNDIAINELMKRYCPNSVLVIIDVKPKDLGLPTEAYISVEEVHDDGTPTSKTFEHVTSEIGAEEAEEVGVEHLLRDIKDTTVGTLSQRITNQVHGLKGLNSKLLDIRSYLEKVATGKLPINHQIIYQLQDVFNLLPDVSLQEFVKAFYLKTNDQMVVVYLASLIRSVVALHNLINNKIANRDAEKKEGQEKEESKKDRKEDKEKDKDKEKSDVKKEEKKEKK.

Residues 9 to 144 (VVVHPLVLLS…TEAYISVEEV (136 aa)) enclose the MPN domain. Lys180 is covalently cross-linked (Glycyl lysine isopeptide (Lys-Gly) (interchain with G-Cter in ubiquitin)). Residues Lys204, Lys214, Lys316, and Lys317 each carry the N6-acetyllysine modification. The tract at residues 281 to 324 (ANRDAEKKEGQEKEESKKDRKEDKEKDKDKEKSDVKKEEKKEKK) is disordered.

The protein belongs to the peptidase M67A family. Component of the 19S proteasome regulatory particle complex. The 26S proteasome consists of a 20S core particle (CP) and two 19S regulatory subunits (RP). The regulatory particle is made of a lid composed of 9 subunits including PSMD7, a base containing 6 ATPases and few additional components. Within the complex, PSMD7 interacts with subunit PSMD4 through their respective MPN domain. Interacts with TRIM5.

Component of the 26S proteasome, a multiprotein complex involved in the ATP-dependent degradation of ubiquitinated proteins. This complex plays a key role in the maintenance of protein homeostasis by removing misfolded or damaged proteins, which could impair cellular functions, and by removing proteins whose functions are no longer required. Therefore, the proteasome participates in numerous cellular processes, including cell cycle progression, apoptosis, or DNA damage repair. The protein is 26S proteasome non-ATPase regulatory subunit 7 (PSMD7) of Homo sapiens (Human).